We begin with the raw amino-acid sequence, 980 residues long: MTTDTRRRVKLYALNAERQWDDRGTGHVSSTYVERLKGISLLVRAESDGSLLLESKIQPDTAYQKQQDTLIVWSEGDNFDLALSFQEKAGCDEIWEKICQVQGKDPSVEITQDIVEESEDERFEDMSDTAPPIELPPCELSRLEDISETIQSCLSTPLRKEKLSMALESESYIKKLLNLFHVCEDLDNTEGLHHLFEIFKNIFLLNKNALFEIMFADDTIFDVVGCLEYDPSVSQPKKHRQYLKQLAKFREAVPIKNLDLLAKIHQTFRVQYIQDIILPTPSVFVEDNMLNTLSSFIFFNKVEIVTMIQDDERYLLDVFAVLTDPTTGDAKRRDTVLFLKEFCNYAQNLQPQGKDSFYKTLTCLGILQALELTLVMNDKKTKSASIDILTAIVEFSPLVVRNYTLNQANRPEVERMLLNIAIEQMLNDSEPELGIAVQLMGIVKILLEPENMLTEKGDFLNFFYKYSVQTLVAPVILNTIGDRPQNEDYQTAQLLGIVLDILSFCVEHHSYHIKNFLLQKDLLKRILVLMKSTHTFLVLGALRLLRKIIALKDEFYNRHIVKCNLFAPVVDAFIRNNGRYNLLESAILELFEFIKLEDIRTLCVYFVENFSKIFDEIEYVQTFKYLKNRYDQYQDRLKDRDKMENRTDGGLPIIRSGGRFRRDQRQMEEEEEMWFNEEDDFTEEIDTYNNVMKSVSEKNGPQTQNQQKSSPPHSTSPHSGLLGSLSTTASSTATSATSGAPVASGSSSPEAISADEQTQAAVHLAAAALQHHQQQQQQQQQNPFQQQTQPEIAELQQQLSSVEAPQSQELELSQSAAASASPTSSSSSLEASTSSSSASSSSSSSSSSSPPGSSAAASLCDSATVAAVAASQFLSTIATAMAASVTAAAATNSSPSISPAPAVSSPDIENADAQLPPSDDASSPASGEQDANSTEGTSSEADKTTAKKGLVDYESDSGEDDYEEDEYSEGPQAQKRARQA.

Positions 1 to 105 (MTTDTRRRVK…EKICQVQGKD (105 aa)) constitute a WH1 domain. Disordered stretches follow at residues 640–668 (RDKM…RQME), 695–861 (VSEK…SLCD), and 885–980 (VTAA…ARQA). Over residues 695-708 (VSEKNGPQTQNQQK) the composition is skewed to polar residues. Composition is skewed to low complexity over residues 709–749 (SSPP…SSSP), 757–789 (QTQA…QQTQ), 803–859 (EAPQ…AASL), and 885–926 (VTAA…SPAS). Residues 929-939 (QDANSTEGTSS) are compositionally biased toward polar residues. Basic and acidic residues predominate over residues 940-951 (EADKTTAKKGLV). Over residues 953-968 (YESDSGEDDYEEDEYS) the composition is skewed to acidic residues.

Belongs to the SMEK family. As to quaternary structure, serine/threonine-protein phosphatase 4 (PP4) occurs in different assemblies of the catalytic and one or more regulatory subunits. Probably part of a PP4 PPP4C-PPP4R2-PPP4R3 complex containing Pp4-19C, PPP4R2r and flfl. Interacts with mira. In terms of tissue distribution, expressed in neuroblasts.

It is found in the nucleus. The protein localises to the membrane. Its subcellular location is the cytoplasm. Regulatory subunit of serine/threonine-protein phosphatase 4. The probable PP4 complex Pp4-19C-PPP4R2r-flfl (PPP4C-PPP4R2-PPP4R3) is required to prevent caspase induced cell death (in vitro). May be involved in DNA damage repair. Key mediator specific for the localization of mira and associated cell fate determinants during both interphase and mitosis. Nuclear Flfl is required to exclude mira/pros from the nucleus when inefficiently bound to the cytoskeleton/cortex, whereas cytosolic or membrane-associated flfl is required for the cortical association and asymmetric localization of mira/pros/brat/stau at metaphase and anaphase. The sequence is that of Serine/threonine-protein phosphatase 4 regulatory subunit 3 (flfl) from Drosophila melanogaster (Fruit fly).